The chain runs to 387 residues: NAD(P)H oxidoreductase RTN4IP1, mitochondrial (387 aa).

The transit peptide at 1-27 directs the protein to the mitochondrion; the sequence is MLMCRRWLVCSLRCHYRSFSFSAARRT. Residues 38-379 form the Enoyl reductase (ER) domain; sequence GKNDVLRFTK…QGHARGKTVV (342 aa). Ser200, Gly202, Val203, Ser223, Tyr241, Leu286, Gly327, Phe329, His372, Ala373, and Arg374 together coordinate NADPH.

The protein belongs to the zinc-containing alcohol dehydrogenase family. Quinone oxidoreductase subfamily.

It localises to the mitochondrion matrix. The protein localises to the mitochondrion outer membrane. The enzyme catalyses a 3-demethylubiquinone + NADH + 2 H(+) = a 3-demethylubiquinol + NAD(+). The catalysed reaction is a 3-demethylubiquinone + NADPH + 2 H(+) = a 3-demethylubiquinol + NADP(+). It carries out the reaction 3-demethylubiquinone-10 + NADH + 2 H(+) = 3-demethylubiquinol-10 + NAD(+). It catalyses the reaction 3-demethylubiquinone-10 + NADPH + 2 H(+) = 3-demethylubiquinol-10 + NADP(+). It functions in the pathway cofactor biosynthesis; ubiquinone biosynthesis. NAD(P)H oxidoreductase involved in the ubiquinone biosynthetic pathway. Required for the O-methyltransferase activity of COQ3. Able to catalyze the oxidoreduction of 3-demethylubiquinone into 3-demethylubiquinol in vitro. However, it is unclear if 3-demethylubiquinone constitutes a substrate in vivo. May also play a role in the regulation of retinal ganglion cell (RGC) neurite outgrowth, and hence in the development of the inner retina and optic nerve. This chain is NAD(P)H oxidoreductase RTN4IP1, mitochondrial (rtn4ip1), found in Danio rerio (Zebrafish).